The chain runs to 175 residues: Zinc finger protein ZAT18 (175 aa).

C2H2-type zinc fingers lie at residues 49-71 (FECK…RASH) and 93-115 (HKCT…MRKH). The Nuclear localization signal motif lies at 71 to 78 (HKKPKLIV). Residues 146-152 (LDLNLTP) carry the EAR-like (transcriptional repression) motif.

Mostly expressed in stems, siliques and leaves, and, to a lower extent, in cotyledons, hypocotyls and roots.

The protein resides in the nucleus. Its function is as follows. Transcription factor involved in stress responses. Positive regulator of the jasmonic acid (JA)- mediated signaling pathway. Triggers the up-regulation of LOX3, VSP2, PAL1 and PAL2 in a JA-dependent manner. Promotes drought and osmotic stress tolerance by preventing reactive oxygen species (ROS) production (e.g. H(2)O(2)). This Arabidopsis thaliana (Mouse-ear cress) protein is Zinc finger protein ZAT18.